The following is a 2772-amino-acid chain: Protein DDB_G0276689 (2772 aa).

Disordered stretches follow at residues 50-82, 371-415, 475-514, 612-650, 685-708, and 933-982; these read QQLK…NNNN, NLET…NGKS, LDIN…KNNL, NKNN…NNNE, LRGS…DSSL, and LVNN…NNSN. Composition is skewed to low complexity over residues 376–412, 478–514, 614–649, and 688–708; these read NNNN…NNNN, NSKN…KNNL, and SFSP…DSSL. Residues 1065–1089 form an LRR 1 repeat; it reads LSKWILNLDDNNYNHIPFMSLVLMP. The segment at 1282-1319 is disordered; the sequence is NNNNIDNNNNNNNNNNNNNNNNNNNNNNNNNNNNNNNN. LRR repeat units follow at residues 1393-1416 and 1543-1567; these read LSNL…TPKN and HKDV…SFSN. Residues 1587 to 1619 are compositionally biased toward low complexity; it reads QNNNYNNNNYNNNYNNNNNNNNNNNNNNNNNNN. Residues 1587-1622 are disordered; it reads QNNNYNNNNYNNNYNNNNNNNNNNNNNNNNNNNIDN. Residues 1899–1922 form an LRR 4 repeat; it reads LEELTKQEIGYQVLLVLPTDLQVE. Polar residues-rich tracts occupy residues 1999–2011 and 2073–2083; these read YVSN…NDQI and LNIVHSTSPNS. Disordered regions lie at residues 1999-2021, 2054-2083, and 2367-2386; these read YVSN…KDKK, EISN…SPNS, and NNSS…NNNN. The LRR 5 repeat unit spans residues 2414–2439; it reads TTIINNIEMDKNRLDEAIYYLKKYGN.

The protein is Protein DDB_G0276689 of Dictyostelium discoideum (Social amoeba).